We begin with the raw amino-acid sequence, 641 residues long: Homeobox protein ceh-38 (641 aa).

2 stretches are compositionally biased toward polar residues: residues 1 to 14 (MESSRTAATSTNGT) and 28 to 38 (DPSSTFINNTG). Disordered regions lie at residues 1-79 (MESS…TSSA) and 129-244 (LHVD…GDRM). Over residues 52–79 (TISPHPITPSASTSSATSATEEPATSSA) the composition is skewed to low complexity. Positions 131–140 (VDSRRRESHD) are enriched in basic and acidic residues. Composition is skewed to polar residues over residues 167-183 (TPTNDRSTDLGSISSLL) and 190-204 (NTIGQSPSPRSTFGS). The segment at residues 308–394 (NAEIGDDIYI…TRLAILDMKT (87 aa)) is a DNA-binding region (CUT). Disordered regions lie at residues 398–428 (NRASGMSPPTPAQNVRTHRRSTSDHDGPVSK), 485–508 (GGNIDEPTPFQQVKNISPPPVGDT), and 552–641 (FGVS…LAAN). The segment at residues 427–486 (SKRPRLVFTDIQKRTLQAIFKETQRPSREMQQTIAEHLRLDLSTVANFFMNARRRSRLGG) is a DNA-binding region (homeobox). A compositionally biased stretch (acidic residues) spans 571 to 604 (HEDDEELDELNDSELAYEEDVEIGDEEEEDEEQA). The segment covering 613–626 (KVEELEEKTVIKEE) has biased composition (basic and acidic residues).

This sequence belongs to the CUT homeobox family. Expressed in the embryo. After gastrulation, expressed in almost all cells. During larval and adult stages, expressed in the dorsal and ventral nerve cord, head and tail neurons, pharynx, gut and head.

Its subcellular location is the nucleus. Its function is as follows. Probable DNA-binding regulatory protein involved in cell-fate specification. In Caenorhabditis elegans, this protein is Homeobox protein ceh-38 (ceh-38).